A 145-amino-acid polypeptide reads, in one-letter code: MNFKYIVAVSFLIASAYARSVQNDEQSLSQRDVLEEEESLREIRGIGGKILSGLKTALKGAAKELASTYLHRKRTAEEHEVMKRLEAVMRDLDSLDYPEEASERETRGFNQDEIANLFTKKEKRILGPVLGLVSNALGGLIKKIG.

Residues 1 to 18 (MNFKYIVAVSFLIASAYA) form the signal peptide. Propeptides lie at residues 19–43 (RSVQ…LREI) and 74–124 (RTAE…KEKR). Position 144 is an isoleucine amide (Ile144).

Belongs to the bombinin family. In terms of tissue distribution, expressed by the skin glands.

The protein localises to the secreted. Functionally, maximin-3 shows antibacterial activity against both Gram-positive and Gram-negative bacteria. It also shows antimicrobial activity against the fungus C.albicans, but not against A.flavus nor P.uticale. It has little hemolytic activity. It possess a significant cytotoxicity against tumor cell lines. It possess a significant anti-HIV activity. It shows high spermicidal activity. In terms of biological role, maximin-H9 shows antimicrobial activity against bacteria and against the fungus C.albicans. Shows strong hemolytic activity. This chain is Maximins 3/H9 type 1, found in Bombina maxima (Giant fire-bellied toad).